A 292-amino-acid chain; its full sequence is tRNA-cytidine(32) 2-sulfurtransferase (292 aa).

The PP-loop motif signature appears at 54–59 (SGGKDS). Residues C129, C132, and C220 each contribute to the [4Fe-4S] cluster site.

It belongs to the TtcA family. In terms of assembly, homodimer. Mg(2+) serves as cofactor. The cofactor is [4Fe-4S] cluster.

The protein localises to the cytoplasm. It catalyses the reaction cytidine(32) in tRNA + S-sulfanyl-L-cysteinyl-[cysteine desulfurase] + AH2 + ATP = 2-thiocytidine(32) in tRNA + L-cysteinyl-[cysteine desulfurase] + A + AMP + diphosphate + H(+). Its pathway is tRNA modification. Its function is as follows. Catalyzes the ATP-dependent 2-thiolation of cytidine in position 32 of tRNA, to form 2-thiocytidine (s(2)C32). The sulfur atoms are provided by the cysteine/cysteine desulfurase (IscS) system. The protein is tRNA-cytidine(32) 2-sulfurtransferase of Cereibacter sphaeroides (strain ATCC 17025 / ATH 2.4.3) (Rhodobacter sphaeroides).